The primary structure comprises 344 residues: DNA-directed RNA polymerase subunit alpha (344 aa).

The alpha N-terminal domain (alpha-NTD) stretch occupies residues 1–238 (MKVIKTAPLI…KQLGVFGERP (238 aa)). Residues 253–344 (DAKDLSAKIE…EKLEDKGGND (92 aa)) are alpha C-terminal domain (alpha-CTD).

It belongs to the RNA polymerase alpha chain family. Homodimer. The RNAP catalytic core consists of 2 alpha, 1 beta, 1 beta' and 1 omega subunit. When a sigma factor is associated with the core the holoenzyme is formed, which can initiate transcription.

The enzyme catalyses RNA(n) + a ribonucleoside 5'-triphosphate = RNA(n+1) + diphosphate. Its function is as follows. DNA-dependent RNA polymerase catalyzes the transcription of DNA into RNA using the four ribonucleoside triphosphates as substrates. This chain is DNA-directed RNA polymerase subunit alpha, found in Helicobacter pylori (strain HPAG1).